We begin with the raw amino-acid sequence, 423 residues long: Glucose-1-phosphate adenylyltransferase (423 aa).

Residues Tyr-98, Gly-163, 178–179 (EK), and Ser-189 contribute to the alpha-D-glucose 1-phosphate site.

Belongs to the bacterial/plant glucose-1-phosphate adenylyltransferase family. In terms of assembly, homotetramer.

The enzyme catalyses alpha-D-glucose 1-phosphate + ATP + H(+) = ADP-alpha-D-glucose + diphosphate. Its pathway is glycan biosynthesis; glycogen biosynthesis. Its function is as follows. Involved in the biosynthesis of ADP-glucose, a building block required for the elongation reactions to produce glycogen. Catalyzes the reaction between ATP and alpha-D-glucose 1-phosphate (G1P) to produce pyrophosphate and ADP-Glc. The sequence is that of Glucose-1-phosphate adenylyltransferase from Thermotoga neapolitana (strain ATCC 49049 / DSM 4359 / NBRC 107923 / NS-E).